The chain runs to 525 residues: GMP synthase [glutamine-hydrolyzing] (525 aa).

A Glutamine amidotransferase type-1 domain is found at 9–207; that stretch reads RILILDFGSQ…VRDICQCEAL (199 aa). Cysteine 86 acts as the Nucleophile in catalysis. Active-site residues include histidine 181 and glutamate 183. Residues 208–400 form the GMPS ATP-PPase domain; sequence WTPAKIIDDA…LGLPYDMLYR (193 aa). 235 to 241 contacts ATP; the sequence is SGGVDSS.

Homodimer.

The enzyme catalyses XMP + L-glutamine + ATP + H2O = GMP + L-glutamate + AMP + diphosphate + 2 H(+). It functions in the pathway purine metabolism; GMP biosynthesis; GMP from XMP (L-Gln route): step 1/1. Catalyzes the synthesis of GMP from XMP. This is GMP synthase [glutamine-hydrolyzing] from Salmonella typhimurium (strain LT2 / SGSC1412 / ATCC 700720).